The following is a 93-amino-acid chain: Phosphoribosyl-ATP pyrophosphatase (93 aa).

This sequence belongs to the PRA-PH family.

The protein resides in the cytoplasm. The enzyme catalyses 1-(5-phospho-beta-D-ribosyl)-ATP + H2O = 1-(5-phospho-beta-D-ribosyl)-5'-AMP + diphosphate + H(+). It participates in amino-acid biosynthesis; L-histidine biosynthesis; L-histidine from 5-phospho-alpha-D-ribose 1-diphosphate: step 2/9. The protein is Phosphoribosyl-ATP pyrophosphatase of Rhodococcus jostii (strain RHA1).